The chain runs to 314 residues: Endo-beta-N-acetylglucosaminidase (314 aa).

Residues 1 to 47 (MQFGIVAAIADGGRTARAGGSVRPPRRPPASHTAWGLPRGRPTGQPH) form the signal peptide. A disordered region spans residues 14-54 (RTARAGGSVRPPRRPPASHTAWGLPRGRPTGQPHATPTKSG). The GH18 domain maps to 55–309 (PTSIAYVEVN…SSMTKVLYGQ (255 aa)). The active-site Proton donor is the glutamate 175.

The protein belongs to the glycosyl hydrolase 18 family. In terms of assembly, monomer.

It is found in the secreted. It catalyses the reaction an N(4)-(oligosaccharide-(1-&gt;3)-[oligosaccharide-(1-&gt;6)]-beta-D-Man-(1-&gt;4)-beta-D-GlcNAc-(1-&gt;4)-alpha-D-GlcNAc)-L-asparaginyl-[protein] + H2O = an oligosaccharide-(1-&gt;3)-[oligosaccharide-(1-&gt;6)]-beta-D-Man-(1-&gt;4)-D-GlcNAc + N(4)-(N-acetyl-beta-D-glucosaminyl)-L-asparaginyl-[protein]. Functionally, cleaves asparagine-linked oligomannose and hybrid, but not complex, oligosaccharides from glycoproteins. This chain is Endo-beta-N-acetylglucosaminidase, found in Flavobacterium sp. (strain SK1022).